We begin with the raw amino-acid sequence, 408 residues long: Multidrug resistance protein MdtG (408 aa).

The next 10 helical transmembrane spans lie at 13–33 (LYIA…VMPF), 51–71 (LWSG…SPFW), 89–109 (LGMA…QFLL), 112–132 (AALG…AIQV), 138–158 (GWAL…GPLL), 170–190 (PVFF…FFFI), 221–241 (LFVT…ILTL), 253–273 (LAFI…LSAP), 287–307 (ILVA…FVQS), and 375–395 (AVFL…WLSL).

This sequence belongs to the major facilitator superfamily. DHA1 family. MdtG (TC 2.A.1.2.20) subfamily.

It is found in the cell inner membrane. The protein is Multidrug resistance protein MdtG of Dickeya zeae (strain Ech586) (Dickeya dadantii (strain Ech586)).